Consider the following 416-residue polypeptide: Glutamate dehydrogenase A2 (416 aa).

Lysine 105 is a catalytic residue.

The protein belongs to the Glu/Leu/Phe/Val dehydrogenases family. Homohexamer.

This Halobacterium salinarum (strain ATCC 700922 / JCM 11081 / NRC-1) (Halobacterium halobium) protein is Glutamate dehydrogenase A2 (gdhA2).